Consider the following 2564-residue polypeptide: MKQLQPQPPPKMGDFYDPEHPTPEEEENEAKIENVQKTGFIKGPMFKGVASSRFLPKGTKTKVNLEEQGRQKVSFSFSLTKKTLQNRFLTALGNEKQSDTPNPPAVPLQVDSTPKMKMEIGDTLSTAEESSPPKSRVELGKIHFKKHLLHVTSRPLLATTTAVASPPTHAAPLPAVIAESTTVDSPPSSPPPPPPPAQATTLSSPAPVTEPVALPHTPITVLMAAPVPLPVDVAVRSLKEPPIIIVPESLEADTKQDTISNSLEEHVTQILNEQADISSKKEDSHIGKDEEIPDSSKISLSCKKTGSKKKSSQSEGIFLGSESDEDSVRTSSSQRSHDLKFSASIEKERDFKKSSAPLKSEDLGKPSRSKTDRDDKYFSYSKLERDTRYVSSRCRSERERRRSRSHSRSERGSRTNLSYSRSERSHYYDSDRRYHRSSPYRERTRYSRPYTDNRARESSDSEEEYKKTYSRRTSSHSSSYRDLRTSSYSKSDRDCKTETSYLEMERRGKYSSKLERESKRTSENEAIKRCCSPPNELGFRRGSSYSKHDSSASRYKSTLSKPIPKSDKFKNSFCCTELNEEIKQSHSFSLQTPCSKGSELRMINKNPEREKAGSPAPSNRLNDSPTLKKLDELPIFKSEFITHDSHDSIKELDSLSKVKNDQLRSFCPIELNINGSPGAESDLATFCTSKTDAVLMTSDDSVTGSELSPLVKACMLSSNGFQNISRCKEKDLDDTCMLHKKSESPFRETEPLVSPHQDKLMSMPVMTVDYSKTVVKEPVDTRVSCCKTKDSDIYCTLNDSNPSLCNSEAENIEPSVMKISSNSFMNVHLESKPVICDSRNLTDHSKFACEEYKQSIGSTSSASVNHFDDLYQPIGSSGIASSLQSLPPGIKVDSLTLLKCGENTSPVLDAVLKSKKSSEFLKHAGKETIVEVGSDLPDSGKGFASRENRRNNGLSGKCLQEAQEEGNSILPERRGRPEISLDERGEGGHVHTSDDSEVVFSSCDLNLTMEDSDGVTYALKCDSSGHAPEIVSTVHEDYSGSSESSNDESDSEDTDSDDSSIPRNRLQSVVVVPKNSTLPMEETSPCSSRSSQSYRHYSDHWEDERLESRRHLYEEKFESIASKACPQTDKFFLHKGTEKNPEISFTQSSRKQIDNRLPELSHPQSDGVDSTSHTDVKSDPLGHPNSEETVKAKIPSRQQEELPIYSSDFEDVPNKSWQQTTFQNRPDSRLGKTELSFSSSCEIPHVDGLHSSEELRNLGWDFSQEKPSTTYQQPDSSYGACGGHKYQQNAEQYGGTRDYWQGNGYWDPRSGRPPGTGVVYDRTQGQVPDSLTDDREEEENWDQQDGSHFSDQSDKFLLSLQKDKGSVQAPEISSNSIKDTLAVNEKKDFSKNLEKNDIKDRGPLKKRRQEIESDSESDGELQDRKKVRVEVEQGETSVPPGSALVGPSCVMDDFRDPQRWKECAKQGKMPCYFDLIEENVYLTERKKNKSHRDIKRMQCECTPLSKDERAQGEIACGEDCLNRLLMIECSSRCPNGDYCSNRRFQRKQHADVEVILTEKKGWGLRAAKDLPSNTFVLEYCGEVLDHKEFKARVKEYARNKNIHYYFMALKNDEIIDATQKGNCSRFMNHSCEPNCETQKWTVNGQLRVGFFTTKLVPSGSELTFDYQFQRYGKEAQKCFCGSANCRGYLGGENRVSIRAAGGKMKKERSRKKDSVDGELEALMENGEGLSDKNQVLSLSRLMVRIETLEQKLTCLELIQNTHSQSCLKSFLERHGLSLLWIWMAELGDGRESNQKLQEEIIKTLEHLPIPTKNMLEESKVLPIIQRWSQTKTAVPPLSEGDGYSSENTSRAHTPLNTPDPSTKLSTEADTDTPKKLMFRRLKIISENSMDSAISDATSELEGKDGKEDLDQLENVPVEEEEELQSQQLLPQQLPECKVDSETNIEASKLPTSEPEADAEIEPKESNGTKLEEPINEETPSQDEEEGVSDVESERSQEQPDKTVDISDLATKLLDSWKDLKEVYRIPKKSQTEKENTTTERGRDAVGFRDQTPAPKTPNRSRERDPDKQTQNKEKRKRRSSLSPPSSAYERGTKRPDDRYDTPTSKKKVRIKDRNKLSTEERRKLFEQEVAQREAQKQQQQMQNLGMTSPLPYDSLGYNAPHHPFAGYPPGYPMQAYVDPSNPNAGKVLLPTPSMDPVCSPAPYDHAQPLVGHSTEPLSAPPPVPVVPHVAAPVEVSSSQYVAQSDGVVHQDSSVAVLPVPAPGPVQGQNYSVWDSNQQSVSVQQQYSPAQSQATIYYQGQTCPTVYGVTSPYSQTTPPIVQSYAQPSLQYIQGQQIFTAHPQGVVVQPAAAVTTIVAPGQPQPLQPSEMVVTNNLLDLPPPSPPKPKTIVLPPNWKTARDPEGKIYYYHVITRQTQWDPPTWESPGDDASLEHEAEMDLGTPTYDENPMKASKKPKTAEADTSSELAKKSKEVFRKEMSQFIVQCLNPYRKPDCKVGRITTTEDFKHLARKLTHGVMNKELKYCKNPEDLECNENVKHKTKEYIKKYMQKFGAVYKPKEDTELE.

The segment covering 1 to 11 has biased composition (pro residues); it reads MKQLQPQPPPK. The disordered stretch occupies residues 1–30; that stretch reads MKQLQPQPPPKMGDFYDPEHPTPEEEENEA. The span at 17 to 30 shows a compositional bias: basic and acidic residues; it reads DPEHPTPEEEENEA. Phosphoserine is present on Ser-131. 3 disordered regions span residues 180–211, 272–561, and 607–626; these read STTV…VTEP, NEQA…TLSK, and PERE…DSPT. Pro residues predominate over residues 187-197; it reads PSSPPPPPPPA. Positions 198 to 207 are enriched in low complexity; it reads QATTLSSPAP. The segment covering 278–290 has biased composition (basic and acidic residues); sequence SSKKEDSHIGKDE. A phosphoserine mark is found at Ser-321, Ser-323, and Ser-344. 4 stretches are compositionally biased toward basic and acidic residues: residues 335-400, 421-432, 439-467, and 479-528; these read RSHD…ERER, RSERSHYYDSDR, PYRE…EYKK, and SYRD…EAIK. Lys-359 participates in a covalent cross-link: Glycyl lysine isopeptide (Lys-Gly) (interchain with G-Cter in SUMO2). Ser-422 is modified (phosphoserine). 3 positions are modified to phosphoserine: Ser-532, Ser-614, and Ser-624. The segment covering 616–625 has biased composition (polar residues); sequence APSNRLNDSP. The residue at position 626 (Thr-626) is a Phosphothreonine. Residue Lys-637 forms a Glycyl lysine isopeptide (Lys-Gly) (interchain with G-Cter in SUMO2) linkage. 4 positions are modified to phosphoserine: Ser-698, Ser-708, Ser-744, and Ser-754. Lys-776 is covalently cross-linked (Glycyl lysine isopeptide (Lys-Gly) (interchain with G-Cter in SUMO2)). 5 disordered regions span residues 964-995, 1036-1101, 1133-1233, 1264-1352, and 1393-1443; these read EEGN…TSDD, EDYS…SDHW, LHKG…LGKT, QEKP…FSDQ, and LEKN…PGSA. Residues 971–994 are compositionally biased toward basic and acidic residues; sequence PERRGRPEISLDERGEGGHVHTSD. Residues 1045–1058 are compositionally biased toward acidic residues; it reads SNDESDSEDTDSDD. Low complexity predominate over residues 1084 to 1095; the sequence is SPCSSRSSQSYR. Position 1098 is a phosphoserine (Ser-1098). The segment covering 1162–1171 has biased composition (polar residues); it reads HPQSDGVDST. Basic and acidic residues predominate over residues 1172-1191; sequence SHTDVKSDPLGHPNSEETVK. Polar residues predominate over residues 1215–1225; sequence KSWQQTTFQNR. Position 1228 is a phosphoserine (Ser-1228). Residues 1265 to 1276 show a composition bias toward polar residues; the sequence is EKPSTTYQQPDS. A compositionally biased stretch (basic and acidic residues) spans 1393–1403; the sequence is LEKNDIKDRGP. A phosphoserine mark is found at Ser-1413, Ser-1415, and Ser-1417. The tract at residues 1418-1714 is interaction with TUBA1A; the sequence is DGELQDRKKV…KKERSRKKDS (297 aa). The segment covering 1421–1431 has biased composition (basic and acidic residues); that stretch reads LQDRKKVRVEV. The AWS domain maps to 1494-1548; that stretch reads IKRMQCECTPLSKDERAQGEIACGEDCLNRLLMIECSSRCPNGDYCSNRRFQRKQ. The Zn(2+) site is built by Cys-1499, Cys-1501, Cys-1516, Cys-1520, Cys-1529, Cys-1533, and Cys-1539. Residues 1550–1667 enclose the SET domain; it reads ADVEVILTEK…SGSELTFDYQ (118 aa). S-adenosyl-L-methionine-binding positions include 1560 to 1562, 1603 to 1605, and 1628 to 1629; these read KGW, HYY, and NH. Position 1631 (Cys-1631) interacts with Zn(2+). Positions 1674-1690 constitute a Post-SET domain; that stretch reads EAQKCFCGSANCRGYLG. S-adenosyl-L-methionine is bound at residue Gln-1676. Zn(2+) is bound at residue Cys-1678. Phe-1679 provides a ligand contact to S-adenosyl-L-methionine. Zn(2+)-binding residues include Cys-1680 and Cys-1685. Ser-1696, Ser-1844, and Ser-1845 each carry phosphoserine. Residues 1831–1872 are disordered; it reads KTAVPPLSEGDGYSSENTSRAHTPLNTPDPSTKLSTEADTDT. Over residues 1844-1867 the composition is skewed to polar residues; it reads SSENTSRAHTPLNTPDPSTKLSTE. 2 positions are modified to phosphothreonine: Thr-1853 and Thr-1872. At Ser-1888 the chain carries Phosphoserine. Positions 1921-2142 are disordered; sequence EELQSQQLLP…EAQKQQQQMQ (222 aa). Positions 1924 to 1935 are enriched in low complexity; that stretch reads QSQQLLPQQLPE. Ser-1952 is subject to Phosphoserine. Basic and acidic residues predominate over residues 1960–1972; sequence IEPKESNGTKLEE. The span at 1973–1990 shows a compositional bias: acidic residues; the sequence is PINEETPSQDEEEGVSDV. Phosphoserine is present on residues Ser-1980, Ser-1988, and Ser-1995. Composition is skewed to basic and acidic residues over residues 1991 to 2004, 2014 to 2046, and 2059 to 2072; these read ESER…KTVD, DSWK…DAVG, and RSRE…TQNK. A phosphoserine mark is found at Ser-2080 and Ser-2082. Basic and acidic residues-rich tracts occupy residues 2090–2100 and 2111–2135; these read RGTKRPDDRYD and KDRN…REAQ. The stretch at 2117–2146 forms a coiled coil; the sequence is STEERRKLFEQEVAQREAQKQQQQMQNLGM. Residues 2137 to 2366 form a low charge region region; sequence QQQQMQNLGM…APGQPQPLQP (230 aa). The WW domain maps to 2389–2422; the sequence is IVLPPNWKTARDPEGKIYYYHVITRQTQWDPPTW. Positions 2439–2465 are disordered; that stretch reads LGTPTYDENPMKASKKPKTAEADTSSE. The tract at residues 2457–2564 is interaction with POLR2A; sequence TAEADTSSEL…YKPKEDTELE (108 aa).

Belongs to the class V-like SAM-binding methyltransferase superfamily. Histone-lysine methyltransferase family. SET2 subfamily. Specifically interacts with hyperphosphorylated C-terminal domain (CTD) of RNA polymerase II large subunit (POLR2A): binds to CTD heptad repeats doubly phosphorylated on 'Ser-2' and 'Ser-5' of each heptad. Interacts with HTT. Interacts with IWS1. Interacts with p53/TP53; leading to regulate p53/TP53 target genes. Component of a complex with HNRNPL. Interacts with TUBA1A; the interaction is independent on alpha-tubulin acetylation on 'Lys-40'. Interacts with STAT1. May be automethylated. In terms of tissue distribution, ubiquitously expressed.

It is found in the nucleus. Its subcellular location is the chromosome. It catalyses the reaction L-lysyl(36)-[histone H3] + 3 S-adenosyl-L-methionine = N(6),N(6),N(6)-trimethyl-L-lysyl(36)-[histone H3] + 3 S-adenosyl-L-homocysteine + 3 H(+). It carries out the reaction L-lysyl-[protein] + S-adenosyl-L-methionine = N(6)-methyl-L-lysyl-[protein] + S-adenosyl-L-homocysteine + H(+). The enzyme catalyses L-lysyl-[protein] + 3 S-adenosyl-L-methionine = N(6),N(6),N(6)-trimethyl-L-lysyl-[protein] + 3 S-adenosyl-L-homocysteine + 3 H(+). With respect to regulation, specifically inhibited by sinefungin derivatives. N-propyl sinefungin (Pr-SNF) interacts preferentially with SETD2. Histone methyltransferase that specifically trimethylates 'Lys-36' of histone H3 (H3K36me3) using dimethylated 'Lys-36' (H3K36me2) as substrate. It is capable of trimethylating unmethylated H3K36 (H3K36me0) in vitro. Represents the main enzyme generating H3K36me3, a specific tag for epigenetic transcriptional activation. Plays a role in chromatin structure modulation during elongation by coordinating recruitment of the FACT complex and by interacting with hyperphosphorylated POLR2A. Acts as a key regulator of DNA mismatch repair in G1 and early S phase by generating H3K36me3, a mark required to recruit MSH6 subunit of the MutS alpha complex: early recruitment of the MutS alpha complex to chromatin to be replicated allows a quick identification of mismatch DNA to initiate the mismatch repair reaction. Required for DNA double-strand break repair in response to DNA damage: acts by mediating formation of H3K36me3, promoting recruitment of RAD51 and DNA repair via homologous recombination (HR). Acts as a tumor suppressor. H3K36me3 also plays an essential role in the maintenance of a heterochromatic state, by recruiting DNA methyltransferase DNMT3A. H3K36me3 is also enhanced in intron-containing genes, suggesting that SETD2 recruitment is enhanced by splicing and that splicing is coupled to recruitment of elongating RNA polymerase. Required during angiogenesis. Required for endoderm development by promoting embryonic stem cell differentiation toward endoderm: acts by mediating formation of H3K36me3 in distal promoter regions of FGFR3, leading to regulate transcription initiation of FGFR3. In addition to histones, also mediates methylation of other proteins, such as tubulins and STAT1. Trimethylates 'Lys-40' of alpha-tubulins such as TUBA1B (alpha-TubK40me3); alpha-TubK40me3 is required for normal mitosis and cytokinesis and may be a specific tag in cytoskeletal remodeling. Involved in interferon-alpha-induced antiviral defense by mediating both monomethylation of STAT1 at 'Lys-525' and catalyzing H3K36me3 on promoters of some interferon-stimulated genes (ISGs) to activate gene transcription. In terms of biological role, (Microbial infection) Recruited to the promoters of adenovirus 12 E1A gene in case of infection, possibly leading to regulate its expression. The chain is Histone-lysine N-methyltransferase SETD2 (SETD2) from Homo sapiens (Human).